The primary structure comprises 186 residues: Shikimate kinase (186 aa).

Position 15-20 (15-20 (GAGKTT)) interacts with ATP. T19 contributes to the Mg(2+) binding site. Positions 37, 61, and 83 each coordinate substrate. R121 contributes to the ATP binding site. R140 serves as a coordination point for substrate.

It belongs to the shikimate kinase family. In terms of assembly, monomer. Requires Mg(2+) as cofactor.

It is found in the cytoplasm. The enzyme catalyses shikimate + ATP = 3-phosphoshikimate + ADP + H(+). It participates in metabolic intermediate biosynthesis; chorismate biosynthesis; chorismate from D-erythrose 4-phosphate and phosphoenolpyruvate: step 5/7. Functionally, catalyzes the specific phosphorylation of the 3-hydroxyl group of shikimic acid using ATP as a cosubstrate. The protein is Shikimate kinase of Psychrobacter arcticus (strain DSM 17307 / VKM B-2377 / 273-4).